The primary structure comprises 452 residues: Keratin, type I cytoskeletal 42 (452 aa).

The head stretch occupies residues 4–93; the sequence is TTSIRQFSTS…GVSDALLGGS (90 aa). 2 coiled-coil regions span residues 93–132 and 188–407; these read SEKE…WYKK and NLRM…HLAT. Positions 94 to 129 are coil 1A; the sequence is EKETMQNLNDRLATYLDRVRALEEANTDLEVKIREW. Positions 94 to 405 constitute an IF rod domain; that stretch reads EKETMQNLND…RLLEGEDAHL (312 aa). Residues 130–147 form a linker 1 region; that stretch reads YKKQGPGPARDYSPYFKT. Residues 148–239 are coil 1B; it reads IEDLRNKILA…KNHEEEMNAL (92 aa). Residues 240 to 262 are linker 12; the sequence is RGQVGGDVNVEMDAAPGVDLSRI. The interval 263-401 is coil 2; that stretch reads LNEMRDQYEK…ATYRRLLEGE (139 aa). A tail region spans residues 402-452; sequence DAHLATQYSSSLASQASREGTVTSRQVRTIVEEVQDGKVVSSREQVHRSTH.

The protein belongs to the intermediate filament family. In terms of assembly, heterodimer of a type I and a type II keratin. Colocalizes with KRT8/KRT18 filament network.

The protein resides in the cytoplasm. The protein is Keratin, type I cytoskeletal 42 of Rattus norvegicus (Rat).